Consider the following 1051-residue polypeptide: Putative helicase/primase complex protein (1051 aa).

It belongs to the asfivirus F1055L family.

In terms of biological role, may be involved in DNA replication. This Ornithodoros (relapsing fever ticks) protein is Putative helicase/primase complex protein.